The sequence spans 199 residues: Inner membrane protein E199L (199 aa).

The N-linked (GlcNAc...) asparagine; by host glycan is linked to N131. The helical transmembrane segment at 150-170 threads the bilayer; that stretch reads INVMNHPFLTLILIILILVII.

This sequence belongs to the asfivirus E199L family. As to quaternary structure, interacts with host PYCR2; this interaction results in autophagy activation. Post-translationally, contains intramolecular disulfide bonds.

It is found in the virion membrane. It localises to the host membrane. Functionally, essential for viral fusion with host endosomal membrane and core release. Not required for virus morphogenesis and egress. Induces complete autophagy through the interaction with and down-regulation of host PYCR2. The chain is Inner membrane protein E199L from African swine fever virus (isolate Tick/Malawi/Lil 20-1/1983) (ASFV).